Consider the following 445-residue polypeptide: Chromosome partition protein MukF (445 aa).

A leucine-zipper region spans residues 213–241 (LSETSSTLRELQDTLQAASDELQTQILDI).

Belongs to the MukF family. In terms of assembly, interacts, and probably forms a ternary complex, with MukE and MukB via its C-terminal region. The complex formation is stimulated by calcium or magnesium. It is required for an interaction between MukE and MukB.

It localises to the cytoplasm. The protein localises to the nucleoid. Functionally, involved in chromosome condensation, segregation and cell cycle progression. May participate in facilitating chromosome segregation by condensation DNA from both sides of a centrally located replisome during cell division. Not required for mini-F plasmid partitioning. Probably acts via its interaction with MukB and MukE. Overexpression results in anucleate cells. It has a calcium binding activity. This chain is Chromosome partition protein MukF, found in Vibrio campbellii (strain ATCC BAA-1116).